The chain runs to 300 residues: Protein SPEAR2 (300 aa).

The span at 1-11 shows a compositional bias: polar residues; it reads MCSNNNTSSGS. A disordered region spans residues 1-64; it reads MCSNNNTSSG…PPLSSSPSLP (64 aa). Over residues 25-38 the composition is skewed to basic residues; the sequence is CRKKQKKDKVRRRG. The short motif at 37-45 is the SPL element; the sequence is RGPGVAELE. Residues 43-54 show a composition bias toward basic and acidic residues; that stretch reads ELEKIRLQEEYK. Residues 55–64 are compositionally biased toward low complexity; that stretch reads PPLSSSPSLP. The EAR signature appears at 294–300; that stretch reads IDLNLKL.

In terms of assembly, homodimer and heterodimer with SPL and SPEARs. Interacts with SPL, SPEAR1, SPEAR3 and SPEAR4. In terms of tissue distribution, expressed in leaves.

In terms of biological role, adapter-like transcriptional repressor recruiting TPL/TPR corepressors to inhibit TCP transcription factors. May be involved in leaf development. The chain is Protein SPEAR2 from Arabidopsis thaliana (Mouse-ear cress).